The primary structure comprises 739 residues: Oxysterol-binding protein-related protein 9 (739 aa).

Residues 2–99 (ASIMEGPLSK…WIHALEETIL (98 aa)) form the PH domain. 2 disordered regions span residues 220-292 (TQAS…SYSS) and 306-371 (SSTS…ESVE). Over residues 249–259 (NLGSRQSPTPI) the composition is skewed to polar residues. Residues 260 to 276 (STGSGQSAPSSSLTSPS) show a composition bias toward low complexity. 3 stretches are compositionally biased toward polar residues: residues 277-292 (HVNL…SYSS), 306-330 (SSTS…STGA), and 338-352 (TESL…TNEA).

The protein belongs to the OSBP family.

The enzyme catalyses a 1,2-diacyl-sn-glycero-3-phospho-(1D-myo-inositol 4-phosphate)(out) + a 1,2-diacyl-sn-glycero-3-phospho-L-serine(in) = a 1,2-diacyl-sn-glycero-3-phospho-(1D-myo-inositol 4-phosphate)(in) + a 1,2-diacyl-sn-glycero-3-phospho-L-serine(out). Interacts with OSBPL11 to function as lipid transfer proteins. Together they form a heterodimer that localizes at the ER-trans-Golgi membrane contact sites, and exchanges phosphatidylserine (1,2-diacyl-sn-glycero-3-phospho-L-serine, PS) for phosphatidylinositol-4-phosphate (1,2-diacyl-sn-glycero-3-phospho-(1D-myo-inositol 4-phosphate), PI(4)P) between the two organelles, a step that is critical for sphingomyelin synthesis in the Golgi complex. The protein is Oxysterol-binding protein-related protein 9 (osbpl9) of Xenopus tropicalis (Western clawed frog).